Consider the following 258-residue polypeptide: Cell division protein ZapD (258 aa).

Belongs to the ZapD family. As to quaternary structure, interacts with FtsZ.

It localises to the cytoplasm. Its function is as follows. Cell division factor that enhances FtsZ-ring assembly. Directly interacts with FtsZ and promotes bundling of FtsZ protofilaments, with a reduction in FtsZ GTPase activity. This Coxiella burnetii (strain RSA 331 / Henzerling II) protein is Cell division protein ZapD.